Here is a 283-residue protein sequence, read N- to C-terminus: Protein FAM170B (283 aa).

The span at 1–11 (MKCYFTDHRGE) shows a compositional bias: basic and acidic residues. Disordered stretches follow at residues 1–58 (MKCY…REEG) and 246–283 (AQGQ…QEKQ).

Belongs to the FAM170 family. Interacts with GOPC. In terms of tissue distribution, exclusively expressed in adult testis.

It localises to the cytoplasmic vesicle. The protein resides in the secretory vesicle. The protein localises to the acrosome. It is found in the acrosome outer membrane. In terms of biological role, plays a role in fertilization through the acrosome reaction. This chain is Protein FAM170B, found in Homo sapiens (Human).